The following is a 167-amino-acid chain: Peptidyl-prolyl cis-trans isomerase-like 3 (167 aa).

A PPIase cyclophilin-type domain is found at 1–153 (MSVTLHTNLG…QEIKLLNVTV (153 aa)).

Belongs to the cyclophilin-type PPIase family. PPIL3 subfamily.

The catalysed reaction is [protein]-peptidylproline (omega=180) = [protein]-peptidylproline (omega=0). Its function is as follows. PPIases accelerate the folding of proteins. It catalyzes the cis-trans isomerization of proline imidic peptide bonds in oligopeptides. This chain is Peptidyl-prolyl cis-trans isomerase-like 3 (CYP10), found in Cryptococcus neoformans var. neoformans serotype D (strain B-3501A) (Filobasidiella neoformans).